Consider the following 458-residue polypeptide: tRNA modification GTPase MnmE (458 aa).

Arginine 26, glutamate 88, and arginine 127 together coordinate (6S)-5-formyl-5,6,7,8-tetrahydrofolate. The TrmE-type G domain occupies 224–378 (GLSTAIIGRP…IEDRINQLFF (155 aa)). Asparagine 234 is a K(+) binding site. Residues 234 to 239 (NVGKSS), 253 to 259 (TDIAGTT), and 278 to 281 (DTAG) each bind GTP. Serine 238 is a Mg(2+) binding site. 3 residues coordinate K(+): threonine 253, isoleucine 255, and threonine 258. Residue threonine 259 participates in Mg(2+) binding. A (6S)-5-formyl-5,6,7,8-tetrahydrofolate-binding site is contributed by lysine 458.

It belongs to the TRAFAC class TrmE-Era-EngA-EngB-Septin-like GTPase superfamily. TrmE GTPase family. As to quaternary structure, homodimer. Heterotetramer of two MnmE and two MnmG subunits. Requires K(+) as cofactor.

Its subcellular location is the cytoplasm. In terms of biological role, exhibits a very high intrinsic GTPase hydrolysis rate. Involved in the addition of a carboxymethylaminomethyl (cmnm) group at the wobble position (U34) of certain tRNAs, forming tRNA-cmnm(5)s(2)U34. The polypeptide is tRNA modification GTPase MnmE (Streptococcus pyogenes serotype M3 (strain ATCC BAA-595 / MGAS315)).